The following is a 274-amino-acid chain: Large ribosomal subunit protein uL2c (274 aa).

2 disordered regions span residues 1 to 22 and 225 to 274; these read MAIHLYKTSTPSTRNGAVDNQV and PVDH…RRSK.

It belongs to the universal ribosomal protein uL2 family. In terms of assembly, part of the 50S ribosomal subunit.

It is found in the plastid. Its subcellular location is the chloroplast. In Silene latifolia (White campion), this protein is Large ribosomal subunit protein uL2c (rpl2).